We begin with the raw amino-acid sequence, 269 residues long: Integral membrane protein 2C (269 aa).

Position 39 is a phosphothreonine (Thr39). Residues 57–77 (VGGVCYLSMGMVVLLMGLVFA) traverse the membrane as a helical; Signal-anchor for type II membrane protein segment. In terms of domain architecture, BRICHOS spans 138-232 (FGGGDPADII…LCNGKDTYRL (95 aa)). A disulfide bridge connects residues Cys165 and Cys224. N-linked (GlcNAc...) asparagine glycosylation is present at Asn171.

Belongs to the ITM2 family. Interacts with BACE1. Interacts with APP. Interacts with STMN2. In terms of processing, type I membrane-bound, as well as soluble, furin has a pre-eminent role in ITM2C proteolytic processing. PCSK7 and PCSK5 may also be involved although to a lesser extent. The soluble form of PCSK7 is incapable of processing ITM2C. Fails to undergo shedding by ADAM10 and intramembrane cleavage by SPPL2B.

The protein localises to the lysosome membrane. It is found in the cell membrane. In terms of biological role, negative regulator of amyloid-beta peptide production. May inhibit the processing of APP by blocking its access to alpha- and beta-secretase. Binding to the beta-secretase-cleaved APP C-terminal fragment is negligible, suggesting that ITM2C is a poor gamma-secretase cleavage inhibitor. May play a role in TNF-induced cell death and neuronal differentiation. This Rattus norvegicus (Rat) protein is Integral membrane protein 2C (Itm2c).